We begin with the raw amino-acid sequence, 213 residues long: Ribosomal RNA small subunit methyltransferase G (213 aa).

S-adenosyl-L-methionine contacts are provided by residues Gly-77, Phe-82, 130-131 (IE), and Arg-146.

The protein belongs to the methyltransferase superfamily. RNA methyltransferase RsmG family.

The protein resides in the cytoplasm. The enzyme catalyses guanosine(527) in 16S rRNA + S-adenosyl-L-methionine = N(7)-methylguanosine(527) in 16S rRNA + S-adenosyl-L-homocysteine. In terms of biological role, specifically methylates the N7 position of guanine in position 527 of 16S rRNA. This chain is Ribosomal RNA small subunit methyltransferase G, found in Bartonella tribocorum (strain CIP 105476 / IBS 506).